A 116-amino-acid chain; its full sequence is Large ribosomal subunit protein bL17 (116 aa).

This sequence belongs to the bacterial ribosomal protein bL17 family. As to quaternary structure, part of the 50S ribosomal subunit. Contacts protein L32.

This is Large ribosomal subunit protein bL17 from Gloeothece citriformis (strain PCC 7424) (Cyanothece sp. (strain PCC 7424)).